Here is a 428-residue protein sequence, read N- to C-terminus: Histidine--tRNA ligase (428 aa).

The protein belongs to the class-II aminoacyl-tRNA synthetase family. As to quaternary structure, homodimer.

The protein resides in the cytoplasm. The enzyme catalyses tRNA(His) + L-histidine + ATP = L-histidyl-tRNA(His) + AMP + diphosphate + H(+). This is Histidine--tRNA ligase from Bordetella bronchiseptica (strain ATCC BAA-588 / NCTC 13252 / RB50) (Alcaligenes bronchisepticus).